Here is a 305-residue protein sequence, read N- to C-terminus: Superkiller complex protein 8 (305 aa).

WD repeat units follow at residues 14 to 57, 62 to 101, 104 to 143, 146 to 187, 188 to 227, 230 to 269, and 272 to 305; these read AHED…LELQ, GHQLGVVSVNISQNGAIAASSSLDAHIRLWDLETGKQIKS, AGPVDAWTVAFSPDSKYIATGSHLGKVNIFGVESGKKEHS, TRGK…HTLE, GHAMPIRSLTFSPDSQLLVTASDDGYIKIYDVQHANLAGT, GHGSWVLSVAFSPDDTHFVSSSSDKSIKVWDTSSRSCVNT, and DHQDQVWSVKYNPTGSKIVSAGDDRAIHIYDCPM.

The protein belongs to the SKI8 family. In terms of assembly, component of the PAF1 complex. Component of the SKI complex.

The protein localises to the nucleus. Its subcellular location is the cytoplasm. Component of the PAF1 complex (PAF1C) which has multiple functions during transcription by RNA polymerase II and is implicated in regulation of development and maintenance of embryonic stem cell pluripotency. PAF1C associates with RNA polymerase II through interaction with POLR2A CTD non-phosphorylated and 'Ser-2'- and 'Ser-5'-phosphorylated forms and is involved in transcriptional elongation, acting both independently and synergistically with TCEA1 and in cooperation with the DSIF complex and HTATSF1. Also acts as a component of the SKI complex, a multiprotein complex that assists the RNA-degrading exosome during the mRNA decay and quality-control pathways. The SKI complex catalyzes mRNA extraction from 80S ribosomal complexes in the 3'-5' direction and channels mRNA to the cytosolic exosome for degradation. The polypeptide is Superkiller complex protein 8 (skic8) (Danio rerio (Zebrafish)).